The primary structure comprises 503 residues: Lysine--tRNA ligase (503 aa).

E414 and E421 together coordinate Mg(2+).

Belongs to the class-II aminoacyl-tRNA synthetase family. Homodimer. It depends on Mg(2+) as a cofactor.

Its subcellular location is the cytoplasm. The catalysed reaction is tRNA(Lys) + L-lysine + ATP = L-lysyl-tRNA(Lys) + AMP + diphosphate. This Neisseria gonorrhoeae (strain ATCC 700825 / FA 1090) protein is Lysine--tRNA ligase.